The following is a 383-amino-acid chain: Glucose-1-phosphate adenylyltransferase (383 aa).

Alpha-D-glucose 1-phosphate contacts are provided by residues tyrosine 99, glycine 164, 179–180 (EK), and serine 190.

It belongs to the bacterial/plant glucose-1-phosphate adenylyltransferase family. As to quaternary structure, homotetramer.

It carries out the reaction alpha-D-glucose 1-phosphate + ATP + H(+) = ADP-alpha-D-glucose + diphosphate. Its pathway is glycan biosynthesis; glycogen biosynthesis. Its function is as follows. Involved in the biosynthesis of ADP-glucose, a building block required for the elongation reactions to produce glycogen. Catalyzes the reaction between ATP and alpha-D-glucose 1-phosphate (G1P) to produce pyrophosphate and ADP-Glc. The polypeptide is Glucose-1-phosphate adenylyltransferase (Halalkalibacterium halodurans (strain ATCC BAA-125 / DSM 18197 / FERM 7344 / JCM 9153 / C-125) (Bacillus halodurans)).